The following is a 216-amino-acid chain: MSYPENVVVLKSNHQLKGLFTIIRNRETKREDFIFYSDRIIRLLIEEGLYCLPFHETTITTPTGCEYQGVTFASKICGVSIVRAGESMEAGLRAVCKHIKIGKILIQRDEETALPKLLYAKLPHDIANRQVLLLDPMLATGGTVTQAVEVLLERGVKEENIVFINLVASPEGIKVFTDKYPRVKVVTGEIDSHLNEKKYIIPGLGDFGNLYFGTED.

GTP-binding positions include Arg-30, Arg-39, 73–76, and Lys-75; that span reads ASKI. Arg-83 provides a ligand contact to 5-phospho-alpha-D-ribose 1-diphosphate. Lys-100 serves as a coordination point for GTP. Residue Arg-108 coordinates 5-phospho-alpha-D-ribose 1-diphosphate. Arg-129 serves as a coordination point for GTP. Residues Asp-135 and 135–143 contribute to the 5-phospho-alpha-D-ribose 1-diphosphate site; that span reads DPMLATGGT. Residue Tyr-199 participates in D-ribose 5-phosphate binding. Residues Ile-200 and 205–207 each bind uracil; that span reads GDF. Asp-206 serves as a coordination point for 5-phospho-alpha-D-ribose 1-diphosphate.

The protein belongs to the UPRTase family. It depends on Mg(2+) as a cofactor.

The catalysed reaction is UMP + diphosphate = 5-phospho-alpha-D-ribose 1-diphosphate + uracil. It participates in pyrimidine metabolism; UMP biosynthesis via salvage pathway; UMP from uracil: step 1/1. With respect to regulation, allosterically activated by GTP. Catalyzes the conversion of uracil and 5-phospho-alpha-D-ribose 1-diphosphate (PRPP) to UMP and diphosphate. The protein is Uracil phosphoribosyltransferase (uprt) of Dictyostelium discoideum (Social amoeba).